The sequence spans 271 residues: PH domain-containing protein ECU06_0670 (271 aa).

The segment at 26 to 145 (AKKTLDSSES…EKKNDAFIPP (120 aa)) is disordered. Composition is skewed to basic and acidic residues over residues 42-64 (EVGE…EPAM), 92-120 (QPEK…LLDK), and 128-140 (EENA…KKND). The PH domain occupies 166–267 (NTVVEGWMWK…WVEKLNETIR (102 aa)).

The sequence is that of PH domain-containing protein ECU06_0670 from Encephalitozoon cuniculi (strain GB-M1) (Microsporidian parasite).